The chain runs to 424 residues: Probable serine/threonine-protein kinase PBL12 (424 aa).

Residues 88–368 enclose the Protein kinase domain; sequence FSRSNMLGEG…CEVVKVLESI (281 aa). ATP-binding positions include 94-102 and lysine 123; that span reads LGEGGFGPV. Catalysis depends on aspartate 218, which acts as the Proton acceptor.

The protein belongs to the protein kinase superfamily. Ser/Thr protein kinase family. As to expression, expressed specifically in roots.

It is found in the cell membrane. It carries out the reaction L-seryl-[protein] + ATP = O-phospho-L-seryl-[protein] + ADP + H(+). It catalyses the reaction L-threonyl-[protein] + ATP = O-phospho-L-threonyl-[protein] + ADP + H(+). May play a role in the signal transduction pathway of osmotic stress. May be involved in plant defense signaling. The polypeptide is Probable serine/threonine-protein kinase PBL12 (Arabidopsis thaliana (Mouse-ear cress)).